Consider the following 380-residue polypeptide: Anhydro-N-acetylmuramic acid kinase (380 aa).

17-24 (GTSMDGAD) is a binding site for ATP.

Belongs to the anhydro-N-acetylmuramic acid kinase family.

The enzyme catalyses 1,6-anhydro-N-acetyl-beta-muramate + ATP + H2O = N-acetyl-D-muramate 6-phosphate + ADP + H(+). It functions in the pathway amino-sugar metabolism; 1,6-anhydro-N-acetylmuramate degradation. Its pathway is cell wall biogenesis; peptidoglycan recycling. Catalyzes the specific phosphorylation of 1,6-anhydro-N-acetylmuramic acid (anhMurNAc) with the simultaneous cleavage of the 1,6-anhydro ring, generating MurNAc-6-P. Is required for the utilization of anhMurNAc either imported from the medium or derived from its own cell wall murein, and thus plays a role in cell wall recycling. This Cupriavidus metallidurans (strain ATCC 43123 / DSM 2839 / NBRC 102507 / CH34) (Ralstonia metallidurans) protein is Anhydro-N-acetylmuramic acid kinase.